The sequence spans 265 residues: Type III pantothenate kinase (265 aa).

Position 6–13 (6–13) interacts with ATP; that stretch reads DVGNTHTV. 112-115 serves as a coordination point for substrate; sequence GADR. Asp-114 (proton acceptor) is an active-site residue. Asp-134 contributes to the K(+) binding site. Position 137 (Thr-137) interacts with ATP. Thr-189 is a substrate binding site.

The protein belongs to the type III pantothenate kinase family. In terms of assembly, homodimer. It depends on NH4(+) as a cofactor. K(+) serves as cofactor.

Its subcellular location is the cytoplasm. It carries out the reaction (R)-pantothenate + ATP = (R)-4'-phosphopantothenate + ADP + H(+). Its pathway is cofactor biosynthesis; coenzyme A biosynthesis; CoA from (R)-pantothenate: step 1/5. Its function is as follows. Catalyzes the phosphorylation of pantothenate (Pan), the first step in CoA biosynthesis. The sequence is that of Type III pantothenate kinase from Streptomyces avermitilis (strain ATCC 31267 / DSM 46492 / JCM 5070 / NBRC 14893 / NCIMB 12804 / NRRL 8165 / MA-4680).